Consider the following 616-residue polypeptide: Chaperone protein HscA (616 aa).

This sequence belongs to the heat shock protein 70 family.

Functionally, chaperone involved in the maturation of iron-sulfur cluster-containing proteins. Has a low intrinsic ATPase activity which is markedly stimulated by HscB. Involved in the maturation of IscU. The chain is Chaperone protein HscA from Yersinia enterocolitica serotype O:8 / biotype 1B (strain NCTC 13174 / 8081).